A 156-amino-acid chain; its full sequence is Putative type II restriction enzyme ApeKORF2002P (156 aa).

The protein to M.jannaschii MJ1199.

It catalyses the reaction Endonucleolytic cleavage of DNA to give specific double-stranded fragments with terminal 5'-phosphates.. A putative type II restriction enzyme, its methylase would be APE_2002. This is Putative type II restriction enzyme ApeKORF2002P from Aeropyrum pernix (strain ATCC 700893 / DSM 11879 / JCM 9820 / NBRC 100138 / K1).